A 305-amino-acid polypeptide reads, in one-letter code: MSFTVQVKEELLLQSSQNKSELSAIIKLSGSLGLASSGLTLSISTENAKIARHIYELLLHFYQIKAEIRHHQKPNLKKNRVYAVLIEDGVNEILNDLHLADSFFGLETGISPLVLENDSWSQAYLRGAFLAAGSVKDPEKGKYQLEIASVYSDHANDLANLMQKFLLDAKVIERSKGTITYLQRAEDIMDFLLVIGAEETKTEFENVKLLREARNDLNRATNAEAANIAKTVNASMKTINNIIKIMDTIGLDQLSGDLQEIAQLRIQHPDYSIQQLADSLTVPITKSGVNHRLRKINKIADELTD.

A DNA-binding region (H-T-H motif) is located at residues 272-305 (SIQQLADSLTVPITKSGVNHRLRKINKIADELTD).

The protein belongs to the WhiA family.

In terms of biological role, involved in cell division and chromosome segregation. The sequence is that of Probable cell division protein WhiA from Streptococcus suis (strain 98HAH33).